We begin with the raw amino-acid sequence, 331 residues long: UPF0194 membrane protein YbhG (331 aa).

Positions 1–19 (MKKPVVIGLAIAAIVAVIA) are cleaved as a signal peptide. Residues 107–208 (EEIAQAAAAV…LDLQDTTLIA (102 aa)) are a coiled coil.

Belongs to the UPF0194 family.

It is found in the periplasm. This chain is UPF0194 membrane protein YbhG, found in Salmonella heidelberg (strain SL476).